Consider the following 296-residue polypeptide: MWRPAQGARWHVPAVLGYGGIPRRASWSNVESVANSRRRPVHPGQEVELDFAREWVEFYDPDNPEHLIAADLTWLLSRWACVFGTPACQGTVAGRPNDGCCSHGAFLSDDDDRTRLADAVHKLTDDDWQFRAKGLRRKGYLELDEHDGQPQHRTRKHKGACIFLNRPGFAGGAGCALHSKALKLGVPPLTMKPDVCWQLPIRRSQEWVTRPDGTEILKTTLTEYDRRGWGSGGADLHWYCTGDPAAHVGTKQVWQSLADELTELLGEKAYGELAAMCKRRSQLGLIAVHPATRAAQ.

This sequence belongs to the Rv0495c family.

In terms of biological role, essential for maintaining intracellular redox homeostasis. This Mycobacterium bovis (strain ATCC BAA-935 / AF2122/97) protein is Probable redox regulatory protein BQ2027_MB0506C.